The chain runs to 52 residues: Large ribosomal subunit protein bL32c (52 aa).

The protein belongs to the bacterial ribosomal protein bL32 family.

It is found in the plastid. It localises to the chloroplast. In Morus indica (Mulberry), this protein is Large ribosomal subunit protein bL32c.